Here is a 378-residue protein sequence, read N- to C-terminus: Chaperone protein DnaJ (378 aa).

The region spanning 3 to 67 (DYYDLLGVSK…QTRGRYDQFG (65 aa)) is the J domain. The CR-type zinc-finger motif lies at 133–215 (GQEREIKIPH…CAGQGVRQVR (83 aa)). Zn(2+) contacts are provided by Cys146, Cys149, Cys163, Cys166, Cys189, Cys192, Cys203, and Cys206. CXXCXGXG motif repeat units follow at residues 146 to 153 (CDTCNGTG), 163 to 170 (CSTCGGVG), 189 to 196 (CPSCEGTG), and 203 to 210 (CPACAGQG).

The protein belongs to the DnaJ family. As to quaternary structure, homodimer. The cofactor is Zn(2+).

The protein resides in the cytoplasm. In terms of biological role, participates actively in the response to hyperosmotic and heat shock by preventing the aggregation of stress-denatured proteins and by disaggregating proteins, also in an autonomous, DnaK-independent fashion. Unfolded proteins bind initially to DnaJ; upon interaction with the DnaJ-bound protein, DnaK hydrolyzes its bound ATP, resulting in the formation of a stable complex. GrpE releases ADP from DnaK; ATP binding to DnaK triggers the release of the substrate protein, thus completing the reaction cycle. Several rounds of ATP-dependent interactions between DnaJ, DnaK and GrpE are required for fully efficient folding. Also involved, together with DnaK and GrpE, in the DNA replication of plasmids through activation of initiation proteins. In Prochlorococcus marinus (strain MIT 9313), this protein is Chaperone protein DnaJ.